A 377-amino-acid chain; its full sequence is Leukocyte elastase inhibitor (377 aa).

At Met-1 the chain carries N-acetylmethionine.

The protein belongs to the serpin family. Ov-serpin subfamily.

The protein resides in the cytoplasm. Regulates the activity of the neutrophil proteases. This is Leukocyte elastase inhibitor (serpinb1) from Xenopus tropicalis (Western clawed frog).